The following is a 418-amino-acid chain: F-box protein At1g10780 (418 aa).

The region spanning 1 to 47 (MDSLPDAILQYILSYLTSARDVAACNCVSKRWKESTDSVKSVVFHRN) is the F-box domain.

The polypeptide is F-box protein At1g10780 (Arabidopsis thaliana (Mouse-ear cress)).